Here is a 419-residue protein sequence, read N- to C-terminus: Histidine--tRNA ligase (419 aa).

Belongs to the class-II aminoacyl-tRNA synthetase family. In terms of assembly, homodimer.

Its subcellular location is the cytoplasm. The enzyme catalyses tRNA(His) + L-histidine + ATP = L-histidyl-tRNA(His) + AMP + diphosphate + H(+). The protein is Histidine--tRNA ligase of Mycoplasmoides gallisepticum (strain R(low / passage 15 / clone 2)) (Mycoplasma gallisepticum).